Consider the following 130-residue polypeptide: Small ribosomal subunit protein uS11 (130 aa).

The protein belongs to the universal ribosomal protein uS11 family. As to quaternary structure, part of the 30S ribosomal subunit. Interacts with proteins S7 and S18. Binds to IF-3.

In terms of biological role, located on the platform of the 30S subunit, it bridges several disparate RNA helices of the 16S rRNA. Forms part of the Shine-Dalgarno cleft in the 70S ribosome. In Caldanaerobacter subterraneus subsp. tengcongensis (strain DSM 15242 / JCM 11007 / NBRC 100824 / MB4) (Thermoanaerobacter tengcongensis), this protein is Small ribosomal subunit protein uS11.